The chain runs to 448 residues: Phosphoglucosamine mutase (448 aa).

Catalysis depends on serine 100, which acts as the Phosphoserine intermediate. 4 residues coordinate Mg(2+): serine 100, aspartate 240, aspartate 242, and aspartate 244. Serine 100 is subject to Phosphoserine.

The protein belongs to the phosphohexose mutase family. In terms of assembly, homodimer, may form a complex with CdaA. Requires Mg(2+) as cofactor. Post-translationally, activated by phosphorylation.

The catalysed reaction is alpha-D-glucosamine 1-phosphate = D-glucosamine 6-phosphate. In terms of biological role, catalyzes the conversion of glucosamine-6-phosphate to glucosamine-1-phosphate. Glucosamine-1-phosphate is used for cell wall biosynthesis. In Bacillus subtilis (strain 168), this protein is Phosphoglucosamine mutase.